Consider the following 258-residue polypeptide: UPF0246 protein Jann_0444 (258 aa).

It belongs to the UPF0246 family.

The chain is UPF0246 protein Jann_0444 from Jannaschia sp. (strain CCS1).